The primary structure comprises 188 residues: E3 ubiquitin-protein ligase RNF183 (188 aa).

Residues 1–157 (MAEQQGREPE…RECFRNPHFR (157 aa)) lie on the Cytoplasmic side of the membrane. Residues 11-58 (CPVCWNPFNNTFHTPKVLDCCHSFCVECLAHISLVTPTRRRLLCPLCR) form an RING-type zinc finger. Residues 158-178 (IFAYMMAVILCGTVLFIFSIF) form a helical; Anchor for type IV membrane protein membrane-spanning segment. Residues 179–188 (CTRRFFWGVG) lie on the Lumenal side of the membrane.

As to quaternary structure, interacts with FATE1. Interacts with SEC16A. Interacts with BCL2L1. Autoubiquitinated (in vitro).

The protein localises to the endoplasmic reticulum membrane. It is found in the endoplasmic reticulum. It localises to the golgi apparatus. Its subcellular location is the cis-Golgi network membrane. The protein resides in the lysosome. The enzyme catalyses S-ubiquitinyl-[E2 ubiquitin-conjugating enzyme]-L-cysteine + [acceptor protein]-L-lysine = [E2 ubiquitin-conjugating enzyme]-L-cysteine + N(6)-ubiquitinyl-[acceptor protein]-L-lysine.. Its pathway is protein modification; protein ubiquitination. Functionally, acts as an E3 ubiquitin ligase catalyzing the covalent attachment of ubiquitin moieties onto substrate proteins. Triggers apoptosis in response to prolonged ER stress by mediating the polyubiquitination and subsequent proteasomal degradation of BCL2L1. May collaborate with FATE1 to restrain BIK protein levels thus regulating apoptotic signaling. This is E3 ubiquitin-protein ligase RNF183 (RNF183) from Bos taurus (Bovine).